We begin with the raw amino-acid sequence, 109 residues long: Tetraspanin-31 (109 aa).

Topologically, residues 1-12 (MVCGGFACSKNA) are cytoplasmic. The chain crosses the membrane as a helical span at residues 13–33 (LCALNVVYMLVGLLLIGVAAW). At 34 to 44 (AKGLGLVSSIH) the chain is on the extracellular side. Residues 45–65 (IIGGVIAVGVFLLLIAVAGLV) traverse the membrane as a helical segment. The Cytoplasmic portion of the chain corresponds to 66 to 72 (GAVNHHQ). Residues 73-93 (VLLFFYMIILGLVFIFQFGIS) form a helical membrane-spanning segment. Over 94 to 109 (CSCLAINLSKQAGIIN) the chain is Extracellular. A glycan (N-linked (GlcNAc...) asparagine) is linked at asparagine 100.

This sequence belongs to the tetraspanin (TM4SF) family.

The protein localises to the membrane. This chain is Tetraspanin-31 (TSPAN31), found in Sus scrofa (Pig).